The chain runs to 556 residues: uncharacterized protein (556 aa).

The disordered stretch occupies residues 69–129 (RRGHTSGHAS…SSARSSSTSG (61 aa)). 2 stretches are compositionally biased toward low complexity: residues 74–85 (SGHASEHTSSSR) and 93–129 (SMSS…STSG). A helical transmembrane segment spans residues 379 to 399 (LGLYIFIGVLLGLIGVIGLFI). An RING-type; atypical zinc finger spans residues 498–541 (CTICLCEYSEESPLYRELPCHHIFHPACIDPYLLKNSDLCPLCK).

It localises to the vacuole membrane. It is found in the cell membrane. This is an uncharacterized protein from Schizosaccharomyces pombe (strain 972 / ATCC 24843) (Fission yeast).